Reading from the N-terminus, the 201-residue chain is 3-isopropylmalate dehydratase small subunit (201 aa).

It belongs to the LeuD family. LeuD type 1 subfamily. In terms of assembly, heterodimer of LeuC and LeuD.

It catalyses the reaction (2R,3S)-3-isopropylmalate = (2S)-2-isopropylmalate. The protein operates within amino-acid biosynthesis; L-leucine biosynthesis; L-leucine from 3-methyl-2-oxobutanoate: step 2/4. In terms of biological role, catalyzes the isomerization between 2-isopropylmalate and 3-isopropylmalate, via the formation of 2-isopropylmaleate. The protein is 3-isopropylmalate dehydratase small subunit of Cronobacter sakazakii (strain ATCC BAA-894) (Enterobacter sakazakii).